Consider the following 414-residue polypeptide: Serpin A3-6 (414 aa).

The N-terminal stretch at 1 to 25 (MRTERVSPLLALGILVAGLCSRVHC) is a signal peptide. N-linked (GlcNAc...) asparagine glycans are attached at residues asparagine 103, asparagine 183, asparagine 233, asparagine 267, and asparagine 321.

The protein belongs to the serpin family. Homodimer.

It localises to the cytoplasmic vesicle. The protein localises to the secretory vesicle. Its subcellular location is the chromaffin granule. The protein resides in the secreted. Serine protease inhibitor. This Bos taurus (Bovine) protein is Serpin A3-6.